A 134-amino-acid polypeptide reads, in one-letter code: Probable glycine cleavage system H protein (134 aa).

In terms of domain architecture, Lipoyl-binding spans T29–K110. K70 bears the N6-lipoyllysine mark.

The protein belongs to the GcvH family. As to quaternary structure, the glycine cleavage system is composed of four proteins: P, T, L and H. (R)-lipoate serves as cofactor.

Its function is as follows. The glycine cleavage system catalyzes the degradation of glycine. The H protein shuttles the methylamine group of glycine from the P protein to the T protein. The polypeptide is Probable glycine cleavage system H protein (Pyrococcus horikoshii (strain ATCC 700860 / DSM 12428 / JCM 9974 / NBRC 100139 / OT-3)).